The chain runs to 298 residues: Porphobilinogen deaminase (298 aa).

An S-(dipyrrolylmethanemethyl)cysteine modification is found at C239.

It belongs to the HMBS family. Monomer. Dipyrromethane is required as a cofactor.

The enzyme catalyses 4 porphobilinogen + H2O = hydroxymethylbilane + 4 NH4(+). The protein operates within porphyrin-containing compound metabolism; protoporphyrin-IX biosynthesis; coproporphyrinogen-III from 5-aminolevulinate: step 2/4. In terms of biological role, tetrapolymerization of the monopyrrole PBG into the hydroxymethylbilane pre-uroporphyrinogen in several discrete steps. The protein is Porphobilinogen deaminase of Orientia tsutsugamushi (strain Boryong) (Rickettsia tsutsugamushi).